The sequence spans 579 residues: CTP synthase 1 (579 aa).

The Glutamine amidotransferase type-1 domain maps to 305–559 (KIALVGKYTN…LGLVAASAGI (255 aa)). Cysteine 404 acts as the For GATase activity in catalysis. Lysine 422 participates in a covalent cross-link: Glycyl lysine isopeptide (Lys-Gly) (interchain with G-Cter in ubiquitin). Catalysis depends on for GATase activity residues histidine 535 and glutamate 537.

Belongs to the CTP synthase family. In terms of assembly, homodimer. Oligomerizes to a tetramer in the presence of its substrates UTP and ATP.

It catalyses the reaction UTP + L-glutamine + ATP + H2O = CTP + L-glutamate + ADP + phosphate + 2 H(+). Its pathway is pyrimidine metabolism; CTP biosynthesis via de novo pathway; CTP from UDP: step 2/2. Activated by GTP and inhibited by CTP. In terms of biological role, catalyzes the ATP-dependent amination of UTP to CTP with either L-glutamine or ammonia as the source of nitrogen. The protein is CTP synthase 1 (URA7) of Saccharomyces cerevisiae (strain ATCC 204508 / S288c) (Baker's yeast).